Here is a 355-residue protein sequence, read N- to C-terminus: Peptide chain release factor 1 (355 aa).

The residue at position 233 (Gln233) is an N5-methylglutamine.

The protein belongs to the prokaryotic/mitochondrial release factor family. Post-translationally, methylated by PrmC. Methylation increases the termination efficiency of RF1.

The protein resides in the cytoplasm. Functionally, peptide chain release factor 1 directs the termination of translation in response to the peptide chain termination codons UAG and UAA. This chain is Peptide chain release factor 1, found in Rickettsia typhi (strain ATCC VR-144 / Wilmington).